The chain runs to 86 residues: Large ribosomal subunit protein bL27 (86 aa).

The disordered stretch occupies residues 1 to 21 (MAHKKGASSSRNGRDSAAQRL).

It belongs to the bacterial ribosomal protein bL27 family.

The polypeptide is Large ribosomal subunit protein bL27 (rpmA) (Mycobacterium tuberculosis (strain CDC 1551 / Oshkosh)).